The chain runs to 86 residues: Neuropeptide precursor capa-1 (86 aa).

Positions 1–19 are cleaved as a signal peptide; it reads MLLWIVATLLIFSLPVSTA.

Expressed in two pairs of neurons in the anterior part of the nervous system (at protein level).

Encodes at least three neuropeptides: two of the periviscerokinin family (APHPSSALLVPYPRV-amide and LYMARV-amide) and one pyrokinin (AFFYTPRI-amide). In terms of biological role, putative ligand for neuromedin U receptor homolog nmur-2. This chain is Neuropeptide precursor capa-1, found in Caenorhabditis elegans.